We begin with the raw amino-acid sequence, 227 residues long: Phosphoglycolate phosphatase (227 aa).

The active-site Nucleophile is the D13. D13, D15, and D176 together coordinate Mg(2+).

The protein belongs to the HAD-like hydrolase superfamily. CbbY/CbbZ/Gph/YieH family. Requires Mg(2+) as cofactor.

The catalysed reaction is 2-phosphoglycolate + H2O = glycolate + phosphate. The protein operates within organic acid metabolism; glycolate biosynthesis; glycolate from 2-phosphoglycolate: step 1/1. Specifically catalyzes the dephosphorylation of 2-phosphoglycolate. Is involved in the dissimilation of the intracellular 2-phosphoglycolate formed during the DNA repair of 3'-phosphoglycolate ends, a major class of DNA lesions induced by oxidative stress. In Nitrosospira multiformis (strain ATCC 25196 / NCIMB 11849 / C 71), this protein is Phosphoglycolate phosphatase.